The primary structure comprises 290 residues: Chitinase 10 (290 aa).

The signal sequence occupies residues Met1–Gly28. Intrachain disulfides connect Cys70–Cys132 and Cys144–Cys153. The active-site Proton donor is the Glu114. 2 N-linked (GlcNAc...) asparagine glycosylation sites follow: Asn193 and Asn234. Residues Cys252 and Cys284 are joined by a disulfide bond.

The protein belongs to the glycosyl hydrolase 19 family. Chitinase class I subfamily. Expressed at low levels in roots, leaves and meristems.

It carries out the reaction Random endo-hydrolysis of N-acetyl-beta-D-glucosaminide (1-&gt;4)-beta-linkages in chitin and chitodextrins.. This chain is Chitinase 10 (Cht10), found in Oryza sativa subsp. japonica (Rice).